The sequence spans 443 residues: Transcriptional adapter 2-alpha (443 aa).

Ser-6 is modified (phosphoserine). Residues 12-69 form a ZZ-type zinc finger; the sequence is SDKPPCRGCSSYLMEPYIKCAECGPPPFFLCLQCFTRGFEYKKHQSDHTYEIMTSDFP. Positions 17, 20, 31, 34, 42, 45, 55, and 59 each coordinate Zn(2+). The region spanning 70–122 is the SANT domain; sequence VLDPSWTAQEEMALLEAVMDCGFGNWQDVANQMCTKTKEECEKHYMKHFINNP. Glycyl lysine isopeptide (Lys-Gly) (interchain with G-Cter in SUMO2) cross-links involve residues Lys-132 and Lys-138. Residues 347 to 359 are compositionally biased toward polar residues; that stretch reads LSPSVPMTSNSGR. The tract at residues 347-372 is disordered; sequence LSPSVPMTSNSGRRSAPPLNLTGLPG. Residues 356-443 form the SWIRM domain; sequence NSGRRSAPPL…LIREGYITKA (88 aa). A DNA-binding region spans residues 426-435; that stretch reads KTRKIYDFLI.

Interacts with GCN5 and NR3C1. Associated with the P/CAF protein in the PCAF complex. Component of the PCAF complex, at least composed of TADA2L/ADA2, TADA3L/ADA3, TAF5L/PAF65-beta, TAF6L/PAF65-alpha, TAF10/TAFII30, TAF12/TAFII20, TAF9/TAFII31 and TRRAP. Component of the ADA2A-containing complex (ATAC), composed of KAT14, KAT2A, TADA2L, TADA3L, ZZ3, MBIP, WDR5, YEATS2, CCDC101 and DR1. Interacts with CCDC134.

It is found in the nucleus. The protein localises to the chromosome. In terms of biological role, component of the ATAC complex, a complex with histone acetyltransferase activity on histones H3 and H4. Required for the function of some acidic activation domains, which activate transcription from a distant site. Binds double-stranded DNA. Binds dinucleosomes, probably at the linker region between neighboring nucleosomes. Plays a role in chromatin remodeling. May promote TP53/p53 'Lys-321' acetylation, leading to reduced TP53 stability and transcriptional activity. May also promote XRCC6 acetylation thus facilitating cell apoptosis in response to DNA damage. The protein is Transcriptional adapter 2-alpha (TADA2A) of Bos taurus (Bovine).